The following is a 126-amino-acid chain: Histone H2B type 1-M (126 aa).

A disordered region spans residues 1–36 (MPEPVKSAPVPKKGSKKAINKAQKKDGKKRKRSRKE). Pro2 is subject to N-acetylproline. ADP-ribosyl glutamic acid is present on Glu3. Position 6 is an N6-(2-hydroxyisobutyryl)lysine; alternate (Lys6). Residue Lys6 is modified to N6-(beta-hydroxybutyryl)lysine; alternate. Lys6 is modified (N6-acetyllysine; alternate). Residue Lys6 is modified to N6-butyryllysine; alternate. Residue Lys6 is modified to N6-crotonyllysine; alternate. Position 6 is an N6-lactoyllysine; alternate (Lys6). Lys6 is covalently cross-linked (Glycyl lysine isopeptide (Lys-Gly) (interchain with G-Cter in SUMO2); alternate). Ser7 bears the ADP-ribosylserine mark. At Lys12 the chain carries N6-(beta-hydroxybutyryl)lysine; alternate. N6-acetyllysine; alternate occurs at positions 12 and 13. An N6-crotonyllysine; alternate mark is found at Lys12 and Lys13. Residue Lys12 is modified to N6-lactoyllysine; alternate. Lys13 carries the post-translational modification N6-(2-hydroxyisobutyryl)lysine; alternate. Ser15 bears the Phosphoserine; by STK4/MST1 mark. 4 positions are modified to N6-acetyllysine; alternate: Lys16, Lys17, Lys21, and Lys24. Lys16, Lys17, Lys21, and Lys24 each carry N6-crotonyllysine; alternate. Lys16, Lys17, Lys21, and Lys24 each carry N6-lactoyllysine; alternate. N6-(beta-hydroxybutyryl)lysine; alternate is present on residues Lys17 and Lys21. An N6-glutaryllysine; alternate modification is found at Lys17. 2 positions are modified to N6-(2-hydroxyisobutyryl)lysine; alternate: Lys21 and Lys24. Lys21 is subject to N6-butyryllysine; alternate. Residue Lys21 forms a Glycyl lysine isopeptide (Lys-Gly) (interchain with G-Cter in SUMO2); alternate linkage. The residue at position 25 (Lys25) is an N6-(2-hydroxyisobutyryl)lysine. Residue Lys35 is modified to N6-(2-hydroxyisobutyryl)lysine; alternate. Lys35 is subject to N6-(beta-hydroxybutyryl)lysine; alternate. Lys35 bears the N6-crotonyllysine; alternate mark. Lys35 carries the post-translational modification N6-glutaryllysine; alternate. Lys35 carries the N6-succinyllysine; alternate modification. Lys35 participates in a covalent cross-link: Glycyl lysine isopeptide (Lys-Gly) (interchain with G-Cter in ubiquitin); alternate. Glu36 is modified (polyADP-ribosyl glutamic acid). Ser37 carries the post-translational modification Phosphoserine; by AMPK. Residues Lys44, Lys47, and Lys58 each carry the N6-(2-hydroxyisobutyryl)lysine; alternate modification. N6-lactoyllysine; alternate is present on Lys44. 2 positions are modified to N6-glutaryllysine; alternate: Lys44 and Lys47. Residue Lys47 is modified to N6-methyllysine; alternate. At Lys58 the chain carries N6,N6-dimethyllysine; alternate. At Arg80 the chain carries Dimethylated arginine. The residue at position 86 (Lys86) is an N6-(2-hydroxyisobutyryl)lysine; alternate. Residue Lys86 is modified to N6-(beta-hydroxybutyryl)lysine; alternate. Lys86 is subject to N6-acetyllysine; alternate. Lys86 carries the post-translational modification N6-lactoyllysine; alternate. An N6,N6,N6-trimethyllysine; alternate modification is found at Lys86. An omega-N-methylarginine mark is found at Arg87 and Arg93. Lys109 is subject to N6-(2-hydroxyisobutyryl)lysine; alternate. Position 109 is an N6-lactoyllysine; alternate (Lys109). N6-glutaryllysine; alternate is present on Lys109. The residue at position 109 (Lys109) is an N6-methyllysine; alternate. The O-linked (GlcNAc) serine glycan is linked to Ser113. Thr116 bears the Phosphothreonine mark. 2 positions are modified to N6-(2-hydroxyisobutyryl)lysine; alternate: Lys117 and Lys121. 2 positions are modified to N6-(beta-hydroxybutyryl)lysine; alternate: Lys117 and Lys121. 2 positions are modified to N6-lactoyllysine; alternate: Lys117 and Lys121. Lys117 and Lys121 each carry N6-glutaryllysine; alternate. An N6-succinyllysine; alternate mark is found at Lys117 and Lys121. An N6-malonyllysine; alternate modification is found at Lys117. Position 117 is an N6-methylated lysine; alternate (Lys117). Lys121 is covalently cross-linked (Glycyl lysine isopeptide (Lys-Gly) (interchain with G-Cter in ubiquitin); alternate).

It belongs to the histone H2B family. The nucleosome is a histone octamer containing two molecules each of H2A, H2B, H3 and H4 assembled in one H3-H4 heterotetramer and two H2A-H2B heterodimers. The octamer wraps approximately 147 bp of DNA. Monoubiquitination at Lys-35 (H2BK34Ub) by the MSL1/MSL2 dimer is required for histone H3 'Lys-4' (H3K4me) and 'Lys-79' (H3K79me) methylation and transcription activation at specific gene loci, such as HOXA9 and MEIS1 loci. Similarly, monoubiquitination at Lys-121 (H2BK120Ub) by the RNF20/40 complex gives a specific tag for epigenetic transcriptional activation and is also prerequisite for histone H3 'Lys-4' and 'Lys-79' methylation. It also functions cooperatively with the FACT dimer to stimulate elongation by RNA polymerase II. H2BK120Ub also acts as a regulator of mRNA splicing: deubiquitination by USP49 is required for efficient cotranscriptional splicing of a large set of exons. In terms of processing, phosphorylation at Ser-37 (H2BS36ph) by AMPK in response to stress promotes transcription. Phosphorylated on Ser-15 (H2BS14ph) by STK4/MST1 during apoptosis; which facilitates apoptotic chromatin condensation. Also phosphorylated on Ser-15 in response to DNA double strand breaks (DSBs), and in correlation with somatic hypermutation and immunoglobulin class-switch recombination. Post-translationally, glcNAcylation at Ser-113 promotes monoubiquitination of Lys-121. It fluctuates in response to extracellular glucose, and associates with transcribed genes. ADP-ribosylated by PARP1 or PARP2 on Ser-7 (H2BS6ADPr) in response to DNA damage. H2BS6ADPr promotes recruitment of CHD1L. Mono-ADP-ribosylated on Glu-3 (H2BE2ADPr) by PARP3 in response to single-strand breaks. Poly ADP-ribosylation on Glu-36 (H2BE35ADPr) by PARP1 regulates adipogenesis: it inhibits phosphorylation at Ser-37 (H2BS36ph), thereby blocking expression of pro-adipogenetic genes. In terms of processing, crotonylation (Kcr) is specifically present in male germ cells and marks testis-specific genes in post-meiotic cells, including X-linked genes that escape sex chromosome inactivation in haploid cells. Crotonylation marks active promoters and enhancers and confers resistance to transcriptional repressors. It is also associated with post-meiotically activated genes on autosomes. Post-translationally, lactylated in macrophages by EP300/P300 by using lactoyl-CoA directly derived from endogenous or exogenous lactate, leading to stimulates gene transcription.

It is found in the nucleus. Its subcellular location is the chromosome. In terms of biological role, core component of nucleosome. Nucleosomes wrap and compact DNA into chromatin, limiting DNA accessibility to the cellular machineries which require DNA as a template. Histones thereby play a central role in transcription regulation, DNA repair, DNA replication and chromosomal stability. DNA accessibility is regulated via a complex set of post-translational modifications of histones, also called histone code, and nucleosome remodeling. This chain is Histone H2B type 1-M, found in Homo sapiens (Human).